The following is a 291-amino-acid chain: ATP synthase gamma chain (291 aa).

This sequence belongs to the ATPase gamma chain family. F-type ATPases have 2 components, CF(1) - the catalytic core - and CF(0) - the membrane proton channel. CF(1) has five subunits: alpha(3), beta(3), gamma(1), delta(1), epsilon(1). CF(0) has three main subunits: a, b and c.

It localises to the cell inner membrane. In terms of biological role, produces ATP from ADP in the presence of a proton gradient across the membrane. The gamma chain is believed to be important in regulating ATPase activity and the flow of protons through the CF(0) complex. In Aquifex aeolicus (strain VF5), this protein is ATP synthase gamma chain.